Here is a 401-residue protein sequence, read N- to C-terminus: Carboxybiotin decarboxylase (401 aa).

Transmembrane regions (helical) follow at residues 20 to 40 (VISITRIALIIFGFFLSYFGF), 46 to 66 (PLIMVPMGLGMIAINAGVLFL), 70 to 90 (VVGTIHLDPLVSEPSVLVNLM), 107 to 127 (LIACIVFFGIGAMSDISFILI), 131 to 151 (ASIIVALFAEMGTFATLIIGI), 173 to 193 (MVLFASLILAKDLFVPIAIIA), 244 to 264 (LCLLLPVASPLILSFFLGIAI), 275 to 295 (LLETTLTYGSTLFLGLLLGAL), 306 to 326 (ISLIVVLGITALLISGIGGVL), and 380 to 400 (VCGLIVSAIATGVFISTLFLL).

Its subcellular location is the cell membrane. It carries out the reaction N(6)-carboxybiotinyl-L-lysyl-[protein] + n Na(+)(in) + H(+) = N(6)-biotinyl-L-lysyl-[protein] + n Na(+)(out) + CO2. Functionally, beta subunit of the biotin-dependent malonate decarboxylase multienzyme complex (EC 7.2.4.4). Acts as an integral membrane-bound carboxybiotin protein decarboxylase by releasing the carboxyl group of the carboxylated biotin carrier MADF. The free energy of the decarboxylation reaction is used to pump Na(+) out of the cell. The chain is Carboxybiotin decarboxylase (madB) from Malonomonas rubra.